Consider the following 145-residue polypeptide: Bacilliredoxin SSP1241 (145 aa).

Belongs to the bacilliredoxin family.

The sequence is that of Bacilliredoxin SSP1241 from Staphylococcus saprophyticus subsp. saprophyticus (strain ATCC 15305 / DSM 20229 / NCIMB 8711 / NCTC 7292 / S-41).